A 1770-amino-acid polypeptide reads, in one-letter code: U3 small nucleolar RNA-associated protein 10 (1770 aa).

The next 2 helical transmembrane spans lie at 499 to 519 and 528 to 548; these read ILGLFIEAIGTGYQAGLFLSS and LTFLLRVIVSPSAPIALRLLA. Residues 1730–1768 form an HEAT repeat; the sequence is MVPIIAELLEDDNEEVESEVRGGLVRVMENVLGEPFDRY.

Belongs to the HEATR1/UTP10 family. Component of the ribosomal small subunit (SSU) processome.

Its subcellular location is the nucleus. The protein resides in the nucleolus. It localises to the membrane. In terms of biological role, involved in nucleolar processing of pre-18S ribosomal RNA. Involved in ribosome biosynthesis. In Candida glabrata (strain ATCC 2001 / BCRC 20586 / JCM 3761 / NBRC 0622 / NRRL Y-65 / CBS 138) (Yeast), this protein is U3 small nucleolar RNA-associated protein 10.